A 156-amino-acid polypeptide reads, in one-letter code: Biotin carboxyl carrier protein of acetyl-CoA carboxylase (156 aa).

A Biotinyl-binding domain is found at 73–156 (PAAAEISGHI…EFDEPLVVIE (84 aa)). Position 122 is an N6-biotinyllysine (Lys-122).

As to quaternary structure, homodimer.

The protein operates within lipid metabolism; fatty acid biosynthesis. Its function is as follows. This protein is a component of the acetyl coenzyme A carboxylase complex; first, biotin carboxylase catalyzes the carboxylation of the carrier protein and then the transcarboxylase transfers the carboxyl group to form malonyl-CoA. The chain is Biotin carboxyl carrier protein of acetyl-CoA carboxylase (accB) from Escherichia coli O6:H1 (strain CFT073 / ATCC 700928 / UPEC).